Here is a 224-residue protein sequence, read N- to C-terminus: Artemin (224 aa).

The first 39 residues, 1–39 (MELGLGEPTALSHCLRPRWQPALWPTLAALALLSSVTEA), serve as a signal peptide directing secretion. Positions 40-111 (SLDPMSRSPA…AALRGARAAR (72 aa)) are excised as a propeptide. The interval 41–124 (LDPMSRSPAS…RSSRARATDA (84 aa)) is disordered. Residues 80–95 (RPPPQSPQPAPPPPGP) show a composition bias toward pro residues. The segment covering 96–116 (ALQSPPAALRGARAARAGTRS) has biased composition (low complexity). 3 disulfides stabilise this stretch: Cys127–Cys192, Cys154–Cys220, and Cys158–Cys222. N-linked (GlcNAc...) asparagine glycosylation is present at Asn206.

The protein belongs to the TGF-beta family. GDNF subfamily. As to quaternary structure, homodimer; disulfide-linked. Interacts with GFRA3 coreceptor and RET: forms a 2:2:2 ternary complex composed of ARTN ligand, GFRA3 and RET receptor. In terms of tissue distribution, cochlea. Expressed at higher level in sesorineural epithelium than in the modiolus region or substantia nigra.

The protein localises to the secreted. Growth factor that supports the survival of sensory and sympathetic peripheral neurons in culture and also supports the survival of dopaminergic neurons of the ventral mid-brain. Acts by binding to its coreceptor, GFRA3, leading to autophosphorylation and activation of the RET receptor. Strong attractant of gut hematopoietic cells thus promoting the formation Peyer's patch-like structures, a major component of the gut-associated lymphoid tissue. This chain is Artemin (Artn), found in Rattus norvegicus (Rat).